A 79-amino-acid polypeptide reads, in one-letter code: Alpha-elapitoxin-Aa2e (79 aa).

5 disulfides stabilise this stretch: Cys-3-Cys-20, Cys-13-Cys-41, Cys-26-Cys-30, Cys-45-Cys-56, and Cys-57-Cys-62.

It belongs to the three-finger toxin family. Long-chain subfamily. Type II alpha-neurotoxin sub-subfamily. As to expression, expressed by the venom gland.

It localises to the secreted. Binds with high affinity to muscular (alpha-1/CHRNA1) and neuronal (alpha-7/CHRNA7) nicotinic acetylcholine receptor (nAChR) and inhibits acetylcholine from binding to the receptor, thereby impairing neuromuscular and neuronal transmission. Produces paralysis, clear dyspnea and lethality on mice. The sequence is that of Alpha-elapitoxin-Aa2e from Acanthophis antarcticus (Common death adder).